The sequence spans 42 residues: Protein MGF 360-20R (42 aa).

Belongs to the asfivirus MGF 360 family.

In terms of biological role, plays a role in virus cell tropism, and may be required for efficient virus replication in macrophages. The protein is Protein MGF 360-20R of African swine fever virus (strain Badajoz 1971 Vero-adapted) (Ba71V).